Consider the following 315-residue polypeptide: Zinc finger CCCH domain-containing protein 23 (315 aa).

The disordered stretch occupies residues 1–21 (MMIGENKNRPHPTIHIPQWDQ). 2 consecutive C3H1-type zinc fingers follow at residues 131–157 (YSGT…HGVF) and 165–189 (RYRT…HTTE).

The polypeptide is Zinc finger CCCH domain-containing protein 23 (Arabidopsis thaliana (Mouse-ear cress)).